Here is a 254-residue protein sequence, read N- to C-terminus: 3-deoxy-manno-octulosonate cytidylyltransferase (254 aa).

Belongs to the KdsB family.

It localises to the cytoplasm. The catalysed reaction is 3-deoxy-alpha-D-manno-oct-2-ulosonate + CTP = CMP-3-deoxy-beta-D-manno-octulosonate + diphosphate. It functions in the pathway nucleotide-sugar biosynthesis; CMP-3-deoxy-D-manno-octulosonate biosynthesis; CMP-3-deoxy-D-manno-octulosonate from 3-deoxy-D-manno-octulosonate and CTP: step 1/1. The protein operates within bacterial outer membrane biogenesis; lipopolysaccharide biosynthesis. Its function is as follows. Activates KDO (a required 8-carbon sugar) for incorporation into bacterial lipopolysaccharide in Gram-negative bacteria. This chain is 3-deoxy-manno-octulosonate cytidylyltransferase, found in Pseudomonas fluorescens (strain ATCC BAA-477 / NRRL B-23932 / Pf-5).